We begin with the raw amino-acid sequence, 246 residues long: UDP-N-acetyl-D-mannosaminuronic acid transferase (246 aa).

It belongs to the glycosyltransferase 26 family.

It carries out the reaction UDP-N-acetyl-alpha-D-mannosaminouronate + N-acetyl-alpha-D-glucosaminyl-di-trans,octa-cis-undecaprenyl diphosphate = beta-D-ManNAcA-(1-&gt;4)-alpha-D-GlcNAc-di-trans,octa-cis-undecaprenyl diphosphate + UDP + H(+). Its pathway is bacterial outer membrane biogenesis; enterobacterial common antigen biosynthesis. Functionally, catalyzes the synthesis of Und-PP-GlcNAc-ManNAcA (Lipid II), the second lipid-linked intermediate involved in enterobacterial common antigen (ECA) synthesis. This Escherichia coli (strain ATCC 8739 / DSM 1576 / NBRC 3972 / NCIMB 8545 / WDCM 00012 / Crooks) protein is UDP-N-acetyl-D-mannosaminuronic acid transferase.